The sequence spans 154 residues: Myoglobin (154 aa).

The 147-residue stretch at 2 to 148 (GLSDGEWQLV…FRKDIAAKYK (147 aa)) folds into the Globin domain. Phosphoserine is present on S4. H65 contributes to the nitrite binding site. H65 contributes to the O2 binding site. T68 carries the phosphothreonine modification. H94 contacts heme b.

Belongs to the globin family. Monomeric.

It localises to the cytoplasm. It is found in the sarcoplasm. It catalyses the reaction Fe(III)-heme b-[protein] + nitric oxide + H2O = Fe(II)-heme b-[protein] + nitrite + 2 H(+). The enzyme catalyses H2O2 + AH2 = A + 2 H2O. In terms of biological role, monomeric heme protein which primary function is to store oxygen and facilitate its diffusion within muscle tissues. Reversibly binds oxygen through a pentacoordinated heme iron and enables its timely and efficient release as needed during periods of heightened demand. Depending on the oxidative conditions of tissues and cells, and in addition to its ability to bind oxygen, it also has a nitrite reductase activity whereby it regulates the production of bioactive nitric oxide. Under stress conditions, like hypoxia and anoxia, it also protects cells against reactive oxygen species thanks to its pseudoperoxidase activity. The sequence is that of Myoglobin (MB) from Peponocephala electra (Melon-headed whale).